Reading from the N-terminus, the 444-residue chain is Putative permease IIC component YwbA (444 aa).

Positions 8 to 421 (MEEKIMPVAG…LITCAIYYPF (414 aa)) constitute a PTS EIIC type-3 domain. The next 10 helical transmembrane spans lie at 31 to 51 (GIILTMPLIIIGSVFLILTSL), 72 to 92 (LGYPVNASFDIMAMIAAFGIA), 104 to 124 (LSAGAISIAAFLLATPFEVPF), 138 to 158 (GIPITLLGSKGLFVAMLIALF), 187 to 207 (FVALIPGFIIVLLVWLARLLI), 223 to 243 (LGTPLSILGGSLGGSLIAEFV), 246 to 266 (LLWSCGIHGASIIGGIMAPIW), 291 to 311 (FFQIWINVGGSGATLALVLTM), 349 to 371 (PLLIVPFIIAPLLTITATYIGMS), and 402 to 422 (SGAVMQLVNLLITCAIYYPFF).

The protein resides in the cell membrane. Functionally, the phosphoenolpyruvate-dependent sugar phosphotransferase system (PTS), a major carbohydrate active -transport system, catalyzes the phosphorylation of incoming sugar substrates concomitant with their translocation across the cell membrane. This chain is Putative permease IIC component YwbA (ywbA), found in Bacillus subtilis (strain 168).